The following is a 514-amino-acid chain: Peptide chain release factor 3 (514 aa).

One can recognise a tr-type G domain in the interval 8–268 (KKRRTFAIIS…TFLKFAPEPH (261 aa)). GTP is bound by residues 17–24 (SHPDAGKT), 85–89 (DTPGH), and 139–142 (NKLD).

The protein belongs to the TRAFAC class translation factor GTPase superfamily. Classic translation factor GTPase family. PrfC subfamily.

Its subcellular location is the cytoplasm. Increases the formation of ribosomal termination complexes and stimulates activities of RF-1 and RF-2. It binds guanine nucleotides and has strong preference for UGA stop codons. It may interact directly with the ribosome. The stimulation of RF-1 and RF-2 is significantly reduced by GTP and GDP, but not by GMP. The polypeptide is Peptide chain release factor 3 (Streptococcus thermophilus (strain ATCC BAA-491 / LMD-9)).